The primary structure comprises 238 residues: Sugar fermentation stimulation protein homolog (238 aa).

The protein belongs to the SfsA family.

This chain is Sugar fermentation stimulation protein homolog, found in Vibrio vulnificus (strain CMCP6).